The primary structure comprises 314 residues: Olfactory receptor 2W3 (314 aa).

At 1–25 (MDGTNGSTQTHFILLGFSDRPHLER) the chain is on the extracellular side. N-linked (GlcNAc...) asparagine glycosylation is present at asparagine 5. The helical transmembrane segment at 26–49 (ILFVVILIAYLLTLVGNTTIILVS) threads the bilayer. The Cytoplasmic segment spans residues 50–57 (RLDPHLHT). The chain crosses the membrane as a helical span at residues 58-79 (PMYFFLAHLSFLDLSFTTSSIP). Topologically, residues 80–100 (QLLYNLNGCDKTISYMGCAIQ) are extracellular. The helical transmembrane segment at 101–120 (LFLFLGLGGVECLLLAVMAY) threads the bilayer. Residues 121 to 139 (DRCVAICKPLHYMVIMNPR) are Cytoplasmic-facing. The helical transmembrane segment at 140–158 (LCRGLVSVTWGCGVANSLA) threads the bilayer. Residues 159-195 (MSPVTLRLPRCGHHEVDHFLREMPALIRMACVSTVAI) are Extracellular-facing. A helical membrane pass occupies residues 196–219 (EGTVFVLAVGVVLSPLVFILLSYS). The Cytoplasmic portion of the chain corresponds to 220–236 (YIVRAVLQIRSASGRQK). A helical transmembrane segment spans residues 237–259 (AFGTCGSHLTVVSLFYGNIIYMY). Over 260 to 272 (MQPGASSSQDQGM) the chain is Extracellular. A helical transmembrane segment spans residues 273-292 (FLMLFYNIVTPLLNPLIYTL). Topologically, residues 293–314 (RNREVKGALGRLLLGKRELGKE) are cytoplasmic.

It belongs to the G-protein coupled receptor 1 family.

Its subcellular location is the cell membrane. Its function is as follows. Odorant receptor. The chain is Olfactory receptor 2W3 (OR2W3) from Homo sapiens (Human).